The chain runs to 157 residues: S-ribosylhomocysteine lyase (157 aa).

Fe cation is bound by residues His54, His58, and Cys124.

This sequence belongs to the LuxS family. In terms of assembly, homodimer. It depends on Fe cation as a cofactor.

It catalyses the reaction S-(5-deoxy-D-ribos-5-yl)-L-homocysteine = (S)-4,5-dihydroxypentane-2,3-dione + L-homocysteine. Involved in the synthesis of autoinducer 2 (AI-2) which is secreted by bacteria and is used to communicate both the cell density and the metabolic potential of the environment. The regulation of gene expression in response to changes in cell density is called quorum sensing. Catalyzes the transformation of S-ribosylhomocysteine (RHC) to homocysteine (HC) and 4,5-dihydroxy-2,3-pentadione (DPD). This is S-ribosylhomocysteine lyase from Lactobacillus acidophilus (strain ATCC 700396 / NCK56 / N2 / NCFM).